Consider the following 443-residue polypeptide: 26S proteasome regulatory subunit rpn501 (443 aa).

Ser-209 carries the post-translational modification Phosphoserine. The PCI domain occupies 230–402 (DVCKYYRAVY…QVISFKKSQN (173 aa)).

Belongs to the proteasome subunit p55 family.

Its subcellular location is the nucleus. Functionally, acts as a regulatory subunit of the 26S proteasome which is involved in the ATP-dependent degradation of ubiquitinated proteins. Required for proper proteasome assembly. The protein is 26S proteasome regulatory subunit rpn501 (rpn501) of Schizosaccharomyces pombe (strain 972 / ATCC 24843) (Fission yeast).